Here is a 207-residue protein sequence, read N- to C-terminus: Guanylate kinase (207 aa).

Residues 4-184 (GLLFIVSAPS…AVSDLYKIIR (181 aa)) enclose the Guanylate kinase-like domain. ATP is bound at residue 11–18 (APSGTGKS).

The protein belongs to the guanylate kinase family.

Its subcellular location is the cytoplasm. The enzyme catalyses GMP + ATP = GDP + ADP. Its function is as follows. Essential for recycling GMP and indirectly, cGMP. The sequence is that of Guanylate kinase from Buchnera aphidicola subsp. Baizongia pistaciae (strain Bp).